The following is a 210-amino-acid chain: 2,3-bisphosphoglycerate-dependent phosphoglycerate mutase (210 aa).

Substrate-binding positions include 9–16, 22–23, arginine 61, 88–91, lysine 99, 115–116, and 159–160; these read RHGQSEWN, TG, ERDY, RR, and GN. The active-site Tele-phosphohistidine intermediate is histidine 10. The Proton donor/acceptor role is filled by glutamate 88.

It belongs to the phosphoglycerate mutase family. BPG-dependent PGAM subfamily. In terms of assembly, homodimer.

It carries out the reaction (2R)-2-phosphoglycerate = (2R)-3-phosphoglycerate. Its pathway is carbohydrate degradation; glycolysis; pyruvate from D-glyceraldehyde 3-phosphate: step 3/5. Catalyzes the interconversion of 2-phosphoglycerate and 3-phosphoglycerate. The polypeptide is 2,3-bisphosphoglycerate-dependent phosphoglycerate mutase (Parvibaculum lavamentivorans (strain DS-1 / DSM 13023 / NCIMB 13966)).